Here is a 345-residue protein sequence, read N- to C-terminus: Glycerol-3-phosphate dehydrogenase [NAD(P)+] (345 aa).

Positions 11, 12, 32, 33, and 106 each coordinate NADPH. The sn-glycerol 3-phosphate site is built by Lys106, Gly137, and Ser139. Residue Ala141 coordinates NADPH. Residues Lys192, Asp245, Ser255, Arg256, and Asn257 each coordinate sn-glycerol 3-phosphate. The active-site Proton acceptor is Lys192. Arg256 serves as a coordination point for NADPH. 2 residues coordinate NADPH: Val280 and Glu282.

It belongs to the NAD-dependent glycerol-3-phosphate dehydrogenase family.

Its subcellular location is the cytoplasm. The enzyme catalyses sn-glycerol 3-phosphate + NAD(+) = dihydroxyacetone phosphate + NADH + H(+). It catalyses the reaction sn-glycerol 3-phosphate + NADP(+) = dihydroxyacetone phosphate + NADPH + H(+). It participates in membrane lipid metabolism; glycerophospholipid metabolism. Its activity is regulated as follows. Does not seem to be inhibited by sn-glycerol 3-phosphate, in contrast to the E.coli homolog enzyme which is very sensitive to allosteric inhibition by G3P. Functionally, catalyzes the reduction of the glycolytic intermediate dihydroxyacetone phosphate (DHAP) to sn-glycerol 3-phosphate (G3P), the key precursor for phospholipid synthesis. This chain is Glycerol-3-phosphate dehydrogenase [NAD(P)+], found in Bacillus subtilis (strain 168).